Reading from the N-terminus, the 198-residue chain is Nucleoid occlusion factor SlmA (198 aa).

One can recognise an HTH tetR-type domain in the interval 9–70 (RNRREEILQA…SLIEFIEDTL (62 aa)). The segment at residues 33-52 (TTAKLAANVGVSEAALYRHF) is a DNA-binding region (H-T-H motif). A coiled-coil region spans residues 117–144 (EQDRLQGRINQLFERIEAQLRQVLKERR).

It belongs to the nucleoid occlusion factor SlmA family. Homodimer. Interacts with FtsZ.

The protein resides in the cytoplasm. Its subcellular location is the nucleoid. In terms of biological role, required for nucleoid occlusion (NO) phenomenon, which prevents Z-ring formation and cell division over the nucleoid. Acts as a DNA-associated cell division inhibitor that binds simultaneously chromosomal DNA and FtsZ, and disrupts the assembly of FtsZ polymers. SlmA-DNA-binding sequences (SBS) are dispersed on non-Ter regions of the chromosome, preventing FtsZ polymerization at these regions. In Edwardsiella ictaluri (strain 93-146), this protein is Nucleoid occlusion factor SlmA.